A 619-amino-acid polypeptide reads, in one-letter code: Chaperone protein HscA homolog (619 aa).

This sequence belongs to the heat shock protein 70 family.

In terms of biological role, chaperone involved in the maturation of iron-sulfur cluster-containing proteins. Has a low intrinsic ATPase activity which is markedly stimulated by HscB. The chain is Chaperone protein HscA homolog from Haemophilus influenzae (strain 86-028NP).